The primary structure comprises 878 residues: Alanine--tRNA ligase (878 aa).

Positions 567, 571, 669, and 673 each coordinate Zn(2+).

It belongs to the class-II aminoacyl-tRNA synthetase family. Zn(2+) is required as a cofactor.

Its subcellular location is the cytoplasm. The catalysed reaction is tRNA(Ala) + L-alanine + ATP = L-alanyl-tRNA(Ala) + AMP + diphosphate. In terms of biological role, catalyzes the attachment of alanine to tRNA(Ala) in a two-step reaction: alanine is first activated by ATP to form Ala-AMP and then transferred to the acceptor end of tRNA(Ala). Also edits incorrectly charged Ser-tRNA(Ala) and Gly-tRNA(Ala) via its editing domain. The polypeptide is Alanine--tRNA ligase (Rickettsia canadensis (strain McKiel)).